Reading from the N-terminus, the 72-residue chain is Translational regulator CsrA (72 aa).

Belongs to the CsrA/RsmA family. As to quaternary structure, homodimer; the beta-strands of each monomer intercalate to form a hydrophobic core, while the alpha-helices form wings that extend away from the core.

The protein localises to the cytoplasm. Its function is as follows. A translational regulator that binds mRNA to regulate translation initiation and/or mRNA stability. Usually binds in the 5'-UTR at or near the Shine-Dalgarno sequence preventing ribosome-binding, thus repressing translation. Its main target seems to be the major flagellin gene, while its function is anatagonized by FliW. The sequence is that of Translational regulator CsrA from Clostridium botulinum (strain Okra / Type B1).